Here is a 367-residue protein sequence, read N- to C-terminus: Dual-specificity RNA methyltransferase RlmN (367 aa).

The Proton acceptor role is filled by E93. A Radical SAM core domain is found at E99–D333. The cysteines at positions 106 and 338 are disulfide-linked. [4Fe-4S] cluster contacts are provided by C113, C117, and C120. Residues G162–E163, S194, S216–H218, and N295 contribute to the S-adenosyl-L-methionine site. The active-site S-methylcysteine intermediate is C338.

This sequence belongs to the radical SAM superfamily. RlmN family. Requires [4Fe-4S] cluster as cofactor.

It localises to the cytoplasm. It catalyses the reaction adenosine(2503) in 23S rRNA + 2 reduced [2Fe-2S]-[ferredoxin] + 2 S-adenosyl-L-methionine = 2-methyladenosine(2503) in 23S rRNA + 5'-deoxyadenosine + L-methionine + 2 oxidized [2Fe-2S]-[ferredoxin] + S-adenosyl-L-homocysteine. The catalysed reaction is adenosine(37) in tRNA + 2 reduced [2Fe-2S]-[ferredoxin] + 2 S-adenosyl-L-methionine = 2-methyladenosine(37) in tRNA + 5'-deoxyadenosine + L-methionine + 2 oxidized [2Fe-2S]-[ferredoxin] + S-adenosyl-L-homocysteine. Its function is as follows. Specifically methylates position 2 of adenine 2503 in 23S rRNA and position 2 of adenine 37 in tRNAs. m2A2503 modification seems to play a crucial role in the proofreading step occurring at the peptidyl transferase center and thus would serve to optimize ribosomal fidelity. This Aeromonas hydrophila subsp. hydrophila (strain ATCC 7966 / DSM 30187 / BCRC 13018 / CCUG 14551 / JCM 1027 / KCTC 2358 / NCIMB 9240 / NCTC 8049) protein is Dual-specificity RNA methyltransferase RlmN.